The chain runs to 374 residues: UPF0496 protein At3g28270 (374 aa).

Residues 171-210 (KVLTTQFERIKKQQESLLEEVSETRKKIQDEISNLEKKTL) are a coiled coil. Transmembrane regions (helical) follow at residues 214–234 (VVFGAAFAIVAVASIALIATG) and 235–255 (VGAAAGFGALAAPLLAAGWAG). A coiled-coil region spans residues 256 to 321 (VYTTLDKKKD…MLKLVDNAID (66 aa)).

The protein belongs to the UPF0496 family.

The protein localises to the membrane. This is UPF0496 protein At3g28270 from Arabidopsis thaliana (Mouse-ear cress).